We begin with the raw amino-acid sequence, 359 residues long: MAAELAMGAELPSSPLAIEYVNDFDLMKFEVKKEPPEAERFCHRLPPGSLSSTPLSTPCSSVPSSPSFCAPSPGTGGGAGGGGSAAQAGGAPGPPSGGPGTVGGASGKAVLEDLYWMSGYQHHLNPEALNLTPEDAVEALIGSGHHGAHHGAHHPAAAAAYEAFRGQSFAGGGGADDMGAGHHHGAHHTAHHHHSAHHHHHHHHHHGGSGHHGGGAGHGGGGAGHHVRLEERFSDDQLVSMSVRELNRQLRGFSKEEVIRLKQKRRTLKNRGYAQSCRFKRVQQRHILESEKCQLQSQVEQLKLEVGRLAKERDLYKEKYEKLAGRGGPGGAGGAGFPREPSPAQAGPGAAKGAPDFFL.

Ser-14 is subject to Phosphoserine. A Glycyl lysine isopeptide (Lys-Gly) (interchain with G-Cter in SUMO2) cross-link involves residue Lys-32. Disordered regions lie at residues 40 to 105 (RFCH…VGGA) and 172 to 226 (GGGA…AGHH). Residues 46–73 (PPGSLSSTPLSTPCSSVPSSPSFCAPSP) show a composition bias toward low complexity. Residue Ser-49 is modified to Phosphoserine. 2 positions are modified to phosphothreonine: Thr-53 and Thr-57. Ser-61 and Ser-65 each carry phosphoserine. Gly residues predominate over residues 74–84 (GTGGGAGGGGS). The span at 181–209 (GHHHGAHHTAHHHHSAHHHHHHHHHHGGS) shows a compositional bias: basic residues. Positions 210–224 (GHHGGGAGHGGGGAG) are enriched in gly residues. The basic motif stretch occupies residues 260-285 (RLKQKRRTLKNRGYAQSCRFKRVQQR). A bZIP domain is found at 260 to 323 (RLKQKRRTLK…DLYKEKYEKL (64 aa)). The leucine-zipper stretch occupies residues 288-309 (LESEKCQLQSQVEQLKLEVGRL). The disordered stretch occupies residues 322 to 359 (KLAGRGGPGGAGGAGFPREPSPAQAGPGAAKGAPDFFL). Positions 325-336 (GRGGPGGAGGAG) are enriched in gly residues. Positions 343-359 (PAQAGPGAAKGAPDFFL) are enriched in low complexity.

Belongs to the bZIP family. Maf subfamily. In terms of assembly, forms homodimers. Interacts with NEUROD1 and PDX1. May interact with MAFB, FOS, JUN and PCAF. Ubiquitinated, leading to its degradation by the proteasome. In terms of processing, phosphorylated at tyrosines. In terms of tissue distribution, expressed in brain, lung, spleen, pancreas and kidney. In the pancreas, expressed in the insulin-producing beta-cells of the islets of Langerhans (at protein level). Also expressed in the eye.

It localises to the nucleus. Transcriptional factor that activates insulin gene expression. Acts synergistically with NEUROD1/BETA2 and PDX1. Binds the insulin enhancer C1/RIPE3b element. Binds to consensus TRE-type MARE 5'-TGCTGACTCAGCA-3' DNA sequence. In Mus musculus (Mouse), this protein is Transcription factor MafA (Mafa).